Consider the following 444-residue polypeptide: Radical S-adenosyl methionine domain-containing protein 1, mitochondrial (444 aa).

The transit peptide at 1–39 (MSTRVLTLTLLKKRHLMQCFWSTVGSVHLRSIASDKIPS) directs the protein to the mitochondrion. The region spanning 40 to 274 (HAVEASLYVH…CRVLEESGFH (235 aa)) is the Radical SAM core domain. Tyr-47 is a binding site for S-adenosyl-L-methionine. Cys-53, Cys-57, and Cys-60 together coordinate [4Fe-4S] cluster. S-adenosyl-L-methionine-binding positions include Gly-102, 103-104 (GT), Glu-135, Gln-162, Arg-174, and Asp-199.

The protein belongs to the anaerobic coproporphyrinogen-III oxidase family. HemW subfamily. [4Fe-4S] cluster serves as cofactor.

It is found in the mitochondrion. In terms of biological role, may be a heme chaperone, appears to bind heme. Homologous bacterial proteins do not have oxygen-independent coproporphyrinogen-III oxidase activity. Binds 1 [4Fe-4S] cluster. The cluster is coordinated with 3 cysteines and an exchangeable S-adenosyl-L-methionine. This chain is Radical S-adenosyl methionine domain-containing protein 1, mitochondrial (rsad1), found in Danio rerio (Zebrafish).